Consider the following 685-residue polypeptide: Protein hook (685 aa).

Residues 6-122 (MEIYESLIRW…RLLQLILGCA (117 aa)) enclose the Calponin-homology (CH) domain. Residues 134-570 (QIMELEESLQ…LLAADSRYKK (437 aa)) adopt a coiled-coil conformation. Disordered regions lie at residues 430–449 (AAEDSESGNTMSKELHSSDV), 593–625 (LEKPSQDGEASSSSATGSGGDASTLTSTGSGRV), and 661–685 (PGQSFLSRQRQPAPRKPMNMPFAKK). The span at 602 to 623 (ASSSSATGSGGDASTLTSTGSG) shows a compositional bias: low complexity. A compositionally biased stretch (polar residues) spans 661–670 (PGQSFLSRQR).

This sequence belongs to the hook family. Homodimer. Interacts with microtubules via its N-terminus.

The protein localises to the cytoplasm. The protein resides in the cytoskeleton. It is found in the endosome. Functionally, involved in endocytic trafficking. Probably acts as a cytoskeletal linker protein that tethers endosome vesicles to the cytoskeleton. This chain is Protein hook, found in Aedes aegypti (Yellowfever mosquito).